The following is a 673-amino-acid chain: DNA ligase (673 aa).

34–38 (DAAFD) serves as a coordination point for NAD(+). The interval 54–73 (LRRPDSPTQRVGGATAPDFA) is disordered. NAD(+) contacts are provided by residues 83 to 84 (SL) and Glu114. Lys116 (N6-AMP-lysine intermediate) is an active-site residue. Residues Arg137, Glu176, Lys292, and Lys316 each coordinate NAD(+). The Zn(2+) site is built by Cys410, Cys413, Cys428, and Cys433. One can recognise a BRCT domain in the interval 594–673 (PAEGPLAGMT…DEFCERYLQG (80 aa)).

It belongs to the NAD-dependent DNA ligase family. LigA subfamily. Mg(2+) serves as cofactor. The cofactor is Mn(2+).

The enzyme catalyses NAD(+) + (deoxyribonucleotide)n-3'-hydroxyl + 5'-phospho-(deoxyribonucleotide)m = (deoxyribonucleotide)n+m + AMP + beta-nicotinamide D-nucleotide.. DNA ligase that catalyzes the formation of phosphodiester linkages between 5'-phosphoryl and 3'-hydroxyl groups in double-stranded DNA using NAD as a coenzyme and as the energy source for the reaction. It is essential for DNA replication and repair of damaged DNA. This chain is DNA ligase, found in Symbiobacterium thermophilum (strain DSM 24528 / JCM 14929 / IAM 14863 / T).